Here is a 156-residue protein sequence, read N- to C-terminus: Oxidized purine nucleoside triphosphate hydrolase (156 aa).

Residues 3–132 (TSRLYTLVLV…WFPLLLQKKK (130 aa)) enclose the Nudix hydrolase domain. 2-oxo-dATP is bound at residue T8. Position 23 (K23) interacts with 8-oxo-dGTP. Residues N33 and 35 to 38 (FGGK) contribute to the 2-oxo-dATP site. Mg(2+) contacts are provided by G36, E52, E55, E56, and E100. A Nudix box motif is present at residues 37-58 (GKVQEGETIEDGAKRELREESG). 117-120 (WPDD) is a 2-oxo-dATP binding site.

Belongs to the Nudix hydrolase family. As to quaternary structure, monomer. Mg(2+) is required as a cofactor.

It is found in the cytoplasm. The protein resides in the nucleus. The protein localises to the nucleus membrane. It localises to the cytoplasmic vesicle. Its subcellular location is the secretory vesicle. It is found in the acrosome. The catalysed reaction is 2-oxo-dATP + H2O = 2-oxo-dAMP + diphosphate + H(+). The enzyme catalyses 2-oxo-ATP + H2O = 2-oxo-AMP + diphosphate + H(+). It carries out the reaction 8-oxo-dGTP + H2O = 8-oxo-dGMP + diphosphate + H(+). It catalyses the reaction 8-oxo-dATP + H2O = 8-oxo-dAMP + diphosphate + H(+). The catalysed reaction is O(6)-methyl-dGTP + H2O = O(6)-methyl-dGMP + diphosphate + H(+). The enzyme catalyses N(6)-methyl-dATP + H2O = N(6)-methyl-dAMP + diphosphate + H(+). It carries out the reaction N(6)-methyl-ATP + H2O = N(6)-methyl-AMP + diphosphate + H(+). Functionally, oxidized purine nucleoside triphosphate hydrolase which is a prominent sanitizer of the oxidized nucleotide pool. Catalyzes the hydrolysis of 2-oxo-dATP (2-hydroxy-dATP) into 2-oxo-dAMP. Also has a significant hydrolase activity toward 2-oxo-ATP, 8-oxo-dGTP and 8-oxo-dATP. Through the hydrolysis of oxidized purine nucleoside triphosphates, prevents their incorporation into DNA and the subsequent transversions A:T to C:G and G:C to T:A. Also catalyzes the hydrolysis of methylated purine nucleoside triphosphate preventing their integration into DNA. Through this antimutagenic activity protects cells from oxidative stress. The chain is Oxidized purine nucleoside triphosphate hydrolase (NUDT1) from Canis lupus familiaris (Dog).